A 624-amino-acid chain; its full sequence is Actin-related protein 8 (624 aa).

Methionine 1 carries the post-translational modification N-acetylmethionine. Residues 1-25 are compositionally biased toward basic and acidic residues; sequence MTQAEKGDTENGKEKGGEKEKEQRG. The interval 1–29 is disordered; the sequence is MTQAEKGDTENGKEKGGEKEKEQRGVKRP. Serine 55 and threonine 56 together coordinate ATP. A Phosphoserine modification is found at serine 132. An ATP-binding site is contributed by 283-286; the sequence is DVGD. Position 412 is a phosphoserine (serine 412). The interval 430–462 is disordered; sequence SKQEQSAKATADRKSASKPIGFEGDLRGQSSDL.

It belongs to the actin family. ARP8 subfamily. In terms of assembly, component of the chromatin remodeling INO80 complex; specifically part of a complex module associated with the DBINO domain of INO80. Interacts with ACTR5; the interaction is observed in asynchronous (interphase) cells but not in metaphase-arrested cells indicative for a possible dissociation of the INO80 complex in mitotic cells. Exists as monomers and dimers, but the dimer is most probably the biologically relevant form required for stable interactions with histones that exploits the twofold symmetry of the nucleosome core.

The protein localises to the nucleus. The protein resides in the chromosome. Its function is as follows. Plays an important role in the functional organization of mitotic chromosomes. Exhibits low basal ATPase activity, and unable to polymerize. Proposed core component of the chromatin remodeling INO80 complex which is involved in transcriptional regulation, DNA replication and probably DNA repair. Required for the recruitment of INO80 (and probably the INO80 complex) to sites of DNA damage. Strongly prefer nucleosomes and H3-H4 tetramers over H2A-H2B dimers, suggesting it may act as a nucleosome recognition module within the complex. The protein is Actin-related protein 8 (ACTR8) of Homo sapiens (Human).